The following is a 1013-amino-acid chain: 2-oxoglutarate dehydrogenase, mitochondrial (1013 aa).

The transit peptide at 1-39 directs the protein to the mitochondrion; that stretch reads MFTLKQVINKSIQTSMKNGVMSSAVKRSFSTVGGINQPK. Residues Arg302, Asp403, Asn436, Ile438, and Gln664 each coordinate thiamine diphosphate. Positions 403, 436, and 438 each coordinate Mg(2+).

This sequence belongs to the alpha-ketoglutarate dehydrogenase family. As to quaternary structure, homodimer. Component of the 2-oxoglutarate dehydrogenase complex. The cofactor is thiamine diphosphate. Mg(2+) serves as cofactor.

Its subcellular location is the mitochondrion matrix. The catalysed reaction is N(6)-[(R)-lipoyl]-L-lysyl-[protein] + 2-oxoglutarate + H(+) = N(6)-[(R)-S(8)-succinyldihydrolipoyl]-L-lysyl-[protein] + CO2. In terms of biological role, the 2-oxoglutarate dehydrogenase complex catalyzes the overall conversion of 2-oxoglutarate to succinyl-CoA and CO(2). It contains multiple copies of three enzymatic components: 2-oxoglutarate dehydrogenase (E1), dihydrolipoamide succinyltransferase (E2) and lipoamide dehydrogenase (E3). In Dictyostelium discoideum (Social amoeba), this protein is 2-oxoglutarate dehydrogenase, mitochondrial (ogdh).